A 142-amino-acid polypeptide reads, in one-letter code: Large ribosomal subunit protein uL11 (142 aa).

It belongs to the universal ribosomal protein uL11 family. As to quaternary structure, part of the ribosomal stalk of the 50S ribosomal subunit. Interacts with L10 and the large rRNA to form the base of the stalk. L10 forms an elongated spine to which L12 dimers bind in a sequential fashion forming a multimeric L10(L12)X complex. One or more lysine residues are methylated.

Forms part of the ribosomal stalk which helps the ribosome interact with GTP-bound translation factors. This Pelotomaculum thermopropionicum (strain DSM 13744 / JCM 10971 / SI) protein is Large ribosomal subunit protein uL11.